The sequence spans 448 residues: tRNA wybutosine-synthesizing protein 2 homolog (448 aa).

Residues S218, K225, E265, and 293 to 294 contribute to the S-adenosyl-L-methionine site; that span reads DN.

It belongs to the class I-like SAM-binding methyltransferase superfamily. TRM5/TYW2 family.

The catalysed reaction is 4-demethylwyosine(37) in tRNA(Phe) + S-adenosyl-L-methionine = 4-demethyl-7-[(3S)-3-amino-3-carboxypropyl]wyosine(37) in tRNA(Phe) + S-methyl-5'-thioadenosine + H(+). Its pathway is tRNA modification; wybutosine-tRNA(Phe) biosynthesis. Its function is as follows. S-adenosyl-L-methionine-dependent transferase that acts as a component of the wybutosine biosynthesis pathway. Wybutosine is a hyper modified guanosine with a tricyclic base found at the 3'-position adjacent to the anticodon of eukaryotic phenylalanine tRNA. Catalyzes the transfer of the alpha-amino-alpha-carboxypropyl (acp) group from S-adenosyl-L-methionine to the C-7 position of 4-demethylwyosine (imG-14) to produce wybutosine-86. This chain is tRNA wybutosine-synthesizing protein 2 homolog (TRMT12), found in Macaca fascicularis (Crab-eating macaque).